The following is a 137-amino-acid chain: Fluoride-specific ion channel FluC 2 (137 aa).

Helical transmembrane passes span M3 to G23, W44 to A64, P76 to L96, and L111 to L131. Na(+) contacts are provided by G86 and T89.

The protein belongs to the fluoride channel Fluc/FEX (TC 1.A.43) family.

It localises to the cell inner membrane. It catalyses the reaction fluoride(in) = fluoride(out). Na(+) is not transported, but it plays an essential structural role and its presence is essential for fluoride channel function. Its function is as follows. Fluoride-specific ion channel. Important for reducing fluoride concentration in the cell, thus reducing its toxicity. The chain is Fluoride-specific ion channel FluC 2 from Bradyrhizobium diazoefficiens (strain JCM 10833 / BCRC 13528 / IAM 13628 / NBRC 14792 / USDA 110).